Reading from the N-terminus, the 469-residue chain is Cysteine--tRNA ligase (469 aa).

Position 28 (Cys28) interacts with Zn(2+). A 'HIGH' region motif is present at residues Pro30 to Asn40. Residues Cys213, His238, and Glu242 each coordinate Zn(2+). A 'KMSKS' region motif is present at residues Lys270–Ser274. Lys273 contributes to the ATP binding site.

This sequence belongs to the class-I aminoacyl-tRNA synthetase family. As to quaternary structure, monomer. Zn(2+) serves as cofactor.

It localises to the cytoplasm. It carries out the reaction tRNA(Cys) + L-cysteine + ATP = L-cysteinyl-tRNA(Cys) + AMP + diphosphate. This Leuconostoc citreum (strain KM20) protein is Cysteine--tRNA ligase.